The following is a 547-amino-acid chain: Vacuolar fusion protein MON1 homolog B (547 aa).

Met1 bears the N-acetylmethionine mark. Positions 1–15 are enriched in low complexity; sequence MEVGGDTAAPAPGGA. Residues 1–106 are disordered; the sequence is MEVGGDTAAP…GGDPSDEEWR (106 aa). A phosphoserine mark is found at Ser59 and Ser61.

It belongs to the MON1/SAND family. As to quaternary structure, interacts with CCNT2; down-regulates CCNT2-mediated activation of viral promoters during herpes simplex virus 1/HHV-1 infection. Found in a complex with RMC1, CCZ1 MON1A and MON1B.

In Homo sapiens (Human), this protein is Vacuolar fusion protein MON1 homolog B (MON1B).